Consider the following 218-residue polypeptide: Glutathione S-transferase class-mu 26 kDa isozyme (218 aa).

Positions 2-83 constitute a GST N-terminal domain; sequence SPILGYWKIK…YIADKHNMLG (82 aa). Residues 7–8, 41–45, 54–55, and 67–68 contribute to the glutathione site; these read YW, WRNKK, NL, and QS. In terms of domain architecture, GST C-terminal spans 85–203; it reads CPKERAEISM…KSSKYIAWPL (119 aa). Tyr111 is a substrate binding site.

This sequence belongs to the GST superfamily. Mu family. Homodimer.

The enzyme catalyses RX + glutathione = an S-substituted glutathione + a halide anion + H(+). Functionally, conjugation of reduced glutathione to a wide number of exogenous and endogenous hydrophobic electrophiles. GST isoenzymes appear to play a central role in the parasite detoxification system. Other functions are also suspected including a role in increasing the solubility of haematin in the parasite gut. In Schistosoma japonicum (Blood fluke), this protein is Glutathione S-transferase class-mu 26 kDa isozyme.